The primary structure comprises 157 residues: Isotocin-neurophysin IT 1 (157 aa).

Residues 1 to 20 (MFGTSVSALCLLFLLSVCTA) form the signal peptide. A disulfide bridge connects residues Cys21 and Cys26. Position 29 is a glycine amide (Gly29). 7 disulfide bridges follow: Cys42–Cys86, Cys45–Cys59, Cys53–Cys76, Cys60–Cys66, Cys93–Cys106, Cys100–Cys118, and Cys107–Cys112.

Belongs to the vasopressin/oxytocin family. Post-translationally, seven disulfide bonds are present in neurophysin.

It is found in the secreted. In terms of biological role, isotocin causes contraction of smooth muscles. The sequence is that of Isotocin-neurophysin IT 1 from Oncorhynchus keta (Chum salmon).